Consider the following 464-residue polypeptide: 3-deoxy-D-manno-octulosonic acid transferase (464 aa).

A helical; Signal-anchor transmembrane segment spans residues M2–I22. In terms of domain architecture, RPE1 insert spans D47 to D93. E107 acts as the Proton acceptor in catalysis. CMP-binding positions include P311–R312, F352–E354, and N377–E380.

The protein belongs to the glycosyltransferase group 1 family. Glycosyltransferase 30 subfamily.

It localises to the cell inner membrane. It catalyses the reaction lipid IVA (E. coli) + CMP-3-deoxy-beta-D-manno-octulosonate = alpha-Kdo-(2-&gt;6)-lipid IVA (E. coli) + CMP + H(+). It participates in bacterial outer membrane biogenesis; LPS core biosynthesis. Its function is as follows. Involved in lipopolysaccharide (LPS) biosynthesis. Catalyzes the transfer of 3-deoxy-D-manno-octulosonate (Kdo) residue(s) from CMP-Kdo to lipid IV(A), the tetraacyldisaccharide-1,4'-bisphosphate precursor of lipid A. This chain is 3-deoxy-D-manno-octulosonic acid transferase (waaA), found in Rickettsia conorii (strain ATCC VR-613 / Malish 7).